A 1543-amino-acid polypeptide reads, in one-letter code: Tubby-related protein 4 (1543 aa).

WD repeat units follow at residues 6–72, 73–115, 116–158, 159–237, 238–276, 277–334, and 335–372; these read EHGP…STPQ, RINF…YEGR, WSVE…SGQR, HWSS…SDDY, APPQDGPAAYPIPVQNIKPLLTVSFTSGDISLMNNYDDL, SPTV…GEHI, and FTLDTLVQRPIISICWGHRDSRLLMASGPALYVVRVEH. In terms of domain architecture, SOCS box spans 364–414; that stretch reads ALYVVRVEHRVSSLQLLCQQAIASTLREDKDVSKLTLPPRLCSYLSTAFIP. Disordered stretches follow at residues 530–577 and 829–850; these read SPKI…SVGS and TKINPPPPYPGTIPAAPTTAAP. S577 carries the phosphoserine modification. An asymmetric dimethylarginine mark is found at R945 and R950. 3 disordered regions span residues 1004-1058, 1326-1355, and 1367-1453; these read SPRA…HTAS, VPQRTEKFGKKNRKRLDSRAEEGSVQAITE, and DFNS…ASEK. Residues 1036-1050 show a composition bias toward polar residues; sequence TCSQCSGTGPSSQPG. Residues 1329–1347 are compositionally biased toward basic and acidic residues; the sequence is RTEKFGKKNRKRLDSRAEE. Phosphoserine is present on residues S1343 and S1374. Residues 1443–1453 show a composition bias toward basic and acidic residues; sequence EEAKCRRASEK. Residues 1466-1543 are TUB; it reads VMANKQPLWN…ALANVTQRLK (78 aa).

Belongs to the TUB family. In terms of tissue distribution, expressed mainly in the brain, skeletal muscle, testis and kidney.

The protein localises to the cytoplasm. The protein operates within protein modification; protein ubiquitination. May be a substrate-recognition component of a SCF-like ECS (Elongin-Cullin-SOCS-box protein) E3 ubiquitin ligase complex which mediates the ubiquitination and subsequent proteasomal degradation of target proteins. The sequence is that of Tubby-related protein 4 (TULP4) from Homo sapiens (Human).